A 290-amino-acid polypeptide reads, in one-letter code: MTITGKTRVTGIIGWPVAHSLSPPMHNAAFEALGLDFAYVPFPVAPERLAAGIAGLAALGVVGFSVTIPHKVAILPLLDRIAPEAELIGAVNTVAVKEGILTGYNTDGIGLLSALRSKLGFQPEGRSVLVLGAGGAARSAVASLGLAGAGRVEVANRSLDAGRGLAETMGERLPGTVFGFQPLGRVSDKGYLSGFDLVVNTTSVGMAGDGFAGLDLSALKRGASVYDMVYAPLVTPLLAQAEVVGVPSANGLGMLAAQGEAAFRIWTGAVPPEGCMEKALAARLATPGNP.

Shikimate-binding positions include 20–22 (SLS) and threonine 67. Lysine 71 (proton acceptor) is an active-site residue. Residues asparagine 92 and aspartate 107 each contribute to the shikimate site. NADP(+) contacts are provided by residues 132–136 (GAGGA) and methionine 228. Residue tyrosine 230 participates in shikimate binding. Glycine 251 is an NADP(+) binding site.

Belongs to the shikimate dehydrogenase family. In terms of assembly, homodimer.

It carries out the reaction shikimate + NADP(+) = 3-dehydroshikimate + NADPH + H(+). The protein operates within metabolic intermediate biosynthesis; chorismate biosynthesis; chorismate from D-erythrose 4-phosphate and phosphoenolpyruvate: step 4/7. In terms of biological role, involved in the biosynthesis of the chorismate, which leads to the biosynthesis of aromatic amino acids. Catalyzes the reversible NADPH linked reduction of 3-dehydroshikimate (DHSA) to yield shikimate (SA). In Geobacter sp. (strain M21), this protein is Shikimate dehydrogenase (NADP(+)).